Consider the following 231-residue polypeptide: Ribose-5-phosphate isomerase A (231 aa).

Substrate is bound by residues 31 to 34, 87 to 90, and 100 to 103; these read SGST, DGAD, and KGGG. E109 acts as the Proton acceptor in catalysis. A substrate-binding site is contributed by K127.

It belongs to the ribose 5-phosphate isomerase family. As to quaternary structure, homodimer.

The enzyme catalyses aldehydo-D-ribose 5-phosphate = D-ribulose 5-phosphate. Its pathway is carbohydrate degradation; pentose phosphate pathway; D-ribose 5-phosphate from D-ribulose 5-phosphate (non-oxidative stage): step 1/1. Catalyzes the reversible conversion of ribose-5-phosphate to ribulose 5-phosphate. This is Ribose-5-phosphate isomerase A from Chlamydia pneumoniae (Chlamydophila pneumoniae).